The sequence spans 268 residues: MDLYAVWGNPITQSKSPLIQNKLAAQTHQTMEYIAKLGNLDSFEQQLLAFFEGGAKGCNITSPFKERAYQLADEYSQRAKLAEACNTLKKLDDGKLYADNTDGIGLVTDLQRLNWLHPNQRILILGAGGATKGVLLPLLQAQQNIVLANRTFSKAKELAERFQPYGNIQAASMDSIPLQTYDVVINATSAGLSGGTAPVDAEILKLGSAFYDMQYAKGTDTPFIALCKSLGLTNVSDGFGMLVAQAAHSFHLWRGVMPDFVAVYEQLK.

Residues 14–16 and Thr61 each bind shikimate; that span reads SKS. Lys65 acts as the Proton acceptor in catalysis. Asn86 and Asp102 together coordinate shikimate. NADP(+) contacts are provided by residues 126-130, 149-154, and Met213; these read GAGGA and NRTFSK. Tyr215 is a binding site for shikimate. Position 238 (Gly238) interacts with NADP(+).

Belongs to the shikimate dehydrogenase family. In terms of assembly, homodimer.

The catalysed reaction is shikimate + NADP(+) = 3-dehydroshikimate + NADPH + H(+). It functions in the pathway metabolic intermediate biosynthesis; chorismate biosynthesis; chorismate from D-erythrose 4-phosphate and phosphoenolpyruvate: step 4/7. Involved in the biosynthesis of the chorismate, which leads to the biosynthesis of aromatic amino acids. Catalyzes the reversible NADPH linked reduction of 3-dehydroshikimate (DHSA) to yield shikimate (SA). The polypeptide is Shikimate dehydrogenase (NADP(+)) (Haemophilus influenzae (strain PittEE)).